The following is a 284-amino-acid chain: Pantothenate synthetase (284 aa).

Residue 30-37 participates in ATP binding; the sequence is MGFLHEGH. The active-site Proton donor is the histidine 37. Glutamine 61 contacts (R)-pantoate. Glutamine 61 is a binding site for beta-alanine. 147-150 serves as a coordination point for ATP; that stretch reads GRKD. Residue glutamine 153 coordinates (R)-pantoate. Residues valine 176 and 184–187 contribute to the ATP site; that span reads MSSR.

Belongs to the pantothenate synthetase family. As to quaternary structure, homodimer.

Its subcellular location is the cytoplasm. It carries out the reaction (R)-pantoate + beta-alanine + ATP = (R)-pantothenate + AMP + diphosphate + H(+). The protein operates within cofactor biosynthesis; (R)-pantothenate biosynthesis; (R)-pantothenate from (R)-pantoate and beta-alanine: step 1/1. Functionally, catalyzes the condensation of pantoate with beta-alanine in an ATP-dependent reaction via a pantoyl-adenylate intermediate. This is Pantothenate synthetase from Pelobacter propionicus (strain DSM 2379 / NBRC 103807 / OttBd1).